The following is a 609-amino-acid chain: Zinc metalloproteinase-disintegrin-like VAP2B (609 aa).

The first 20 residues, 1–20 (MIQVLLVTICLAAFPYQGSS), serve as a signal peptide directing secretion. A propeptide spanning residues 21 to 189 (IILESGNVND…KKASQLVVTA (169 aa)) is cleaved from the precursor. A Pyrrolidone carboxylic acid (Glu) modification is found at glutamate 190. One can recognise a Peptidase M12B domain in the interval 198–393 (RFVELFLVVD…HNPECILNEP (196 aa)). Ca(2+) contacts are provided by glutamate 201 and aspartate 285. 3 disulfides stabilise this stretch: cysteine 308/cysteine 388, cysteine 348/cysteine 372, and cysteine 350/cysteine 355. Histidine 333 lines the Zn(2+) pocket. Residue glutamate 334 is part of the active site. Zn(2+) is bound by residues histidine 337 and histidine 343. An N-linked (GlcNAc...) asparagine glycan is attached at asparagine 371. Ca(2+) contacts are provided by cysteine 388, asparagine 391, valine 403, asparagine 406, leucine 408, glutamate 410, glutamate 413, and aspartate 416. The Disintegrin domain maps to 401–487 (PPVCGNELLE…ECPADVFHKN (87 aa)). Intrachain disulfides connect cysteine 404–cysteine 423, cysteine 404–cysteine 433, cysteine 415–cysteine 428, cysteine 415–cysteine 433, cysteine 417–cysteine 423, cysteine 427–cysteine 450, cysteine 441–cysteine 447, cysteine 446–cysteine 472, cysteine 459–cysteine 479, cysteine 466–cysteine 491, cysteine 466–cysteine 498, cysteine 491–cysteine 503, cysteine 498–cysteine 503, cysteine 510–cysteine 525, cysteine 510–cysteine 560, cysteine 525–cysteine 571, cysteine 538–cysteine 548, cysteine 548–cysteine 555, cysteine 555–cysteine 597, cysteine 560–cysteine 571, cysteine 591–cysteine 602, and cysteine 597–cysteine 602. The segment at 459 to 472 (CRASMSECDPAEHC) is inhibits platelet aggregation. The D/ECD-tripeptide signature appears at 465-467 (ECD). Positions 467, 468, 470, 482, and 483 each coordinate Ca(2+).

Belongs to the venom metalloproteinase (M12B) family. P-III subfamily. P-IIIb sub-subfamily. Monomer or heterodimer; non-covalently linked. Interacts with fibrillar collagen. The cofactor is Zn(2+). In terms of processing, the N-terminus is blocked. In terms of tissue distribution, expressed by the venom gland.

The protein localises to the secreted. Its function is as follows. Zinc metalloprotease that abolishes platelet aggregation induced by collagen, but has no effect on platelet aggregation induced by ADP or thromboxane analog. This inhibition may be due to its ability to bind collagen and block the binding site on collagen for platelets and/or to its ability to bind to the platelet alpha-2/beta-1 collagen receptor (ITGA2/ITGB1) to block its interaction with collagen and hence prevent platelet stimulation. Abolishes platelet aggregation induced by collagen (IC(50)=66 nM) but not ADP-stimulated platelet aggregation. This inhibition may be due to its ability to bind collagen and block the binding site on collagen for platelets and/or to its ability to bind to the platelet alpha-2/beta-1 collagen receptor (ITGA2/ITGB1) to block its interaction with collagen and hence prevent platelet stimulation. The polypeptide is Zinc metalloproteinase-disintegrin-like VAP2B (Crotalus atrox (Western diamondback rattlesnake)).